Consider the following 260-residue polypeptide: MSAYDKVMAARSKDRPTSKDYIKNIFTNFTEFHGDRRFGDDNAVVAGIGLLGNRPVTVIALEKGQDTKERLSRNFGSAHPEGYRKALRQMKLAEKFNRPVVCFIDTSGAYCGIGAEERGQGQAIAENLITMIDLKVPIISILIGEGGSGGALALAVADEVWMLENAIYSVISPEGCASILWKDSARVKEVAECLKLTADDLYSLGVTDMVIKENGGDFIRVYEDLSNKILHSINKYYEFSADKLVKMRFEKYQRLGMITQ.

The CoA carboxyltransferase C-terminal domain maps to 1-235; that stretch reads MSAYDKVMAA…SNKILHSINK (235 aa).

Belongs to the AccA family. In terms of assembly, acetyl-CoA carboxylase is a heterohexamer composed of biotin carboxyl carrier protein (AccB), biotin carboxylase (AccC) and two subunits each of ACCase subunit alpha (AccA) and ACCase subunit beta (AccD).

It localises to the cytoplasm. It catalyses the reaction N(6)-carboxybiotinyl-L-lysyl-[protein] + acetyl-CoA = N(6)-biotinyl-L-lysyl-[protein] + malonyl-CoA. It participates in lipid metabolism; malonyl-CoA biosynthesis; malonyl-CoA from acetyl-CoA: step 1/1. Functionally, component of the acetyl coenzyme A carboxylase (ACC) complex. First, biotin carboxylase catalyzes the carboxylation of biotin on its carrier protein (BCCP) and then the CO(2) group is transferred by the carboxyltransferase to acetyl-CoA to form malonyl-CoA. The polypeptide is Acetyl-coenzyme A carboxylase carboxyl transferase subunit alpha (Ruminiclostridium cellulolyticum (strain ATCC 35319 / DSM 5812 / JCM 6584 / H10) (Clostridium cellulolyticum)).